Here is a 261-residue protein sequence, read N- to C-terminus: Phosphoadenosine phosphosulfate reductase (261 aa).

It belongs to the PAPS reductase family. CysH subfamily.

It catalyses the reaction [thioredoxin]-disulfide + sulfite + adenosine 3',5'-bisphosphate + 2 H(+) = [thioredoxin]-dithiol + 3'-phosphoadenylyl sulfate. It functions in the pathway sulfur metabolism; hydrogen sulfide biosynthesis; sulfite from sulfate: step 3/3. In terms of biological role, the NADP dependent reduction of PAPS into sulfite involves thioredoxin which probably plays the role of a thiol carrier. This is Phosphoadenosine phosphosulfate reductase (MET16) from Saccharomyces cerevisiae (strain ATCC 204508 / S288c) (Baker's yeast).